Consider the following 171-residue polypeptide: CASP-like protein 0U2 (171 aa).

Residues 1 to 22 (MPVFGLAALKLNWEALSTPKFR) are Cytoplasmic-facing. The helical transmembrane segment at 23 to 42 (VTFAQWVCSLLMWSLMASYS) threads the bilayer. The Extracellular segment spans residues 43 to 48 (KHGEFK). Residues 49–69 (FVVVFGLVMWGLASTYLVYQL) traverse the membrane as a helical segment. Over 70–77 (LNGPPLAP) the chain is Cytoplasmic. A helical transmembrane segment spans residues 78 to 98 (IVEFWANVAAGSLAFICLVLA). Residues 99–121 (SATCNRAVGEPQTKVCSGELKPK) are Extracellular-facing. The chain crosses the membrane as a helical span at residues 122–142 (ASAAFAFLLLCAYGGLAYLSW). The Cytoplasmic portion of the chain corresponds to 143–171 (RTWRNPPTIASYALHDDPEFAQPLHSSHK).

The protein belongs to the Casparian strip membrane proteins (CASP) family. In terms of assembly, homodimer and heterodimers.

The protein resides in the cell membrane. This is CASP-like protein 0U2 from Chlorokybus atmophyticus (Soil alga).